The chain runs to 82 residues: Small ribosomal subunit protein uS17 (82 aa).

It belongs to the universal ribosomal protein uS17 family. Part of the 30S ribosomal subunit.

Functionally, one of the primary rRNA binding proteins, it binds specifically to the 5'-end of 16S ribosomal RNA. The polypeptide is Small ribosomal subunit protein uS17 (Ehrlichia ruminantium (strain Gardel)).